Consider the following 908-residue polypeptide: Vacuolar membrane protease (908 aa).

Positions 1–25 (MTSGEEEEGTREQVPVSQPTGTTSI) are disordered. Topologically, residues 1-48 (MTSGEEEEGTREQVPVSQPTGTTSIVSTKEKQPNIFIRAIRATFGYRK) are cytoplasmic. A compositionally biased stretch (polar residues) spans 15–25 (PVSQPTGTTSI). A helical membrane pass occupies residues 49-69 (TSLTLFVLLTIFFTVAFSSYD). Topologically, residues 70-381 (NSLDFTIDLP…FSTSVTTLNT (312 aa)) are vacuolar. N-linked (GlcNAc...) asparagine glycosylation is found at Asn-143 and Asn-162. His-176 and Asp-188 together coordinate Zn(2+). Glu-221 functions as the Proton acceptor in the catalytic mechanism. Residues Glu-222, Glu-247, and His-319 each coordinate Zn(2+). Residue Asn-354 is glycosylated (N-linked (GlcNAc...) asparagine). Residues 382–402 (INMVLIVLFPVLSGPLLFITV) form a helical membrane-spanning segment. At 403–411 (RYKKWNIGT) the chain is on the cytoplasmic side. A helical transmembrane segment spans residues 412–432 (ANLFSLPLAIVITSLVGAVVV). Residues 433–449 (NQGFRLVNEFLPASRPM) lie on the Vacuolar side of the membrane. Residues 450–470 (LLVTTTTSILLLTYYILLNGI) traverse the membrane as a helical segment. Over 471 to 480 (NFVSPSGDQK) the chain is Cytoplasmic. A helical membrane pass occupies residues 481 to 501 (LVSIIQISFIYWIALIFVTRG). The Vacuolar segment spans residues 502-514 (LSQNAIGDDHTGE). A helical transmembrane segment spans residues 515–535 (FAFTILFLLEATASLFGLIGW). Over 536–602 (TFTRSVKEPT…MQHFGYDWSL (67 aa)) the chain is Cytoplasmic. The tract at residues 543–584 (EPTGDEEPLLNGRMERYVDGSDDEDDVEEEDDEDQSEEENHQ) is disordered. Residues 562–579 (GSDDEDDVEEEDDEDQSE) are compositionally biased toward acidic residues. A helical membrane pass occupies residues 603–623 (QFLLIVPISSLVIYNSGWLVI). Over 624–638 (DGINKSIQESLVAEN) the chain is Vacuolar. N-linked (GlcNAc...) asparagine glycosylation is present at Asn-627. A helical membrane pass occupies residues 639–659 (FIYLIIQLFSQFWILPILPFV). Over 660-664 (YKLNR) the chain is Cytoplasmic. A helical membrane pass occupies residues 665-685 (FMVLGLIAFALVGVTLISSVD). Residues 686–908 (PFNQDNPLKL…LVSLTNRIEV (223 aa)) lie on the Vacuolar side of the membrane. N-linked (GlcNAc...) asparagine glycans are attached at residues Asn-752 and Asn-764.

Belongs to the peptidase M28 family. It depends on Zn(2+) as a cofactor.

The protein localises to the vacuole membrane. May be involved in vacuolar sorting and osmoregulation. In Candida tropicalis (strain ATCC MYA-3404 / T1) (Yeast), this protein is Vacuolar membrane protease.